Here is a 120-residue protein sequence, read N- to C-terminus: Flagellar protein FliT (120 aa).

The tract at residues 1-50 (MERHQHLLSEYQQILTLSEQMLMLATVENWNTLVDLEMTYLKAVENTANI) is required for homodimerization. Residues 60-98 (LQELLRQKLRSILENEIEIKRLLQRRLDKLSELVGQSTR) form a fliD binding region.

This sequence belongs to the FliT family. As to quaternary structure, homodimer. Interacts with FliD and FlhC.

The protein resides in the cytoplasm. It localises to the cytosol. Its function is as follows. Dual-function protein that regulates the transcription of class 2 flagellar operons and that also acts as an export chaperone for the filament-capping protein FliD. As a transcriptional regulator, acts as an anti-FlhDC factor; it directly binds FlhC, thus inhibiting the binding of the FlhC/FlhD complex to class 2 promoters, resulting in decreased expression of class 2 flagellar operons. As a chaperone, effects FliD transition to the membrane by preventing its premature polymerization, and by directing it to the export apparatus. The protein is Flagellar protein FliT of Yersinia pestis (strain Pestoides F).